A 507-amino-acid chain; its full sequence is Steroid (22S)-hydroxylase (507 aa).

The chain crosses the membrane as a helical span at residues 12–32 (LLFFLPYILLALLTFYTTTVA). Residue C444 participates in heme binding.

This sequence belongs to the cytochrome P450 family. It depends on heme as a cofactor.

It is found in the membrane. The enzyme catalyses a C27-steroid + reduced [NADPH--hemoprotein reductase] + O2 = a (22S)-22-hydroxy C27-steroid + oxidized [NADPH--hemoprotein reductase] + H2O + H(+). It carries out the reaction a C28-steroid + reduced [NADPH--hemoprotein reductase] + O2 = a (22S)-22-hydroxy C28-steroid + oxidized [NADPH--hemoprotein reductase] + H2O + H(+). The catalysed reaction is campesterol + reduced [NADPH--hemoprotein reductase] + O2 = (22S)-22-hydroxycampesterol + oxidized [NADPH--hemoprotein reductase] + H2O + H(+). It catalyses the reaction campestanol + reduced [NADPH--hemoprotein reductase] + O2 = 6-deoxycathasterone + oxidized [NADPH--hemoprotein reductase] + H2O + H(+). The protein operates within plant hormone biosynthesis; brassinosteroid biosynthesis. Functionally, involved in reduction steps of the biosynthesis of plant campesterol-derivative steroids, ending to castasterone (CS) but missing brassinolide (BL). Catalyzes the conversion of campesterol (CR) to (22S)-22-hydroxycampesterol (22-OHCR, 22-hydroxyCR) and of campestanol (CN) to 6-deoxycathasterone (6-deoxoCT). This chain is Steroid (22S)-hydroxylase, found in Brachypodium distachyon (Purple false brome).